A 229-amino-acid chain; its full sequence is Putative N-acetylmannosamine-6-phosphate 2-epimerase (229 aa).

This sequence belongs to the NanE family.

The enzyme catalyses an N-acyl-D-glucosamine 6-phosphate = an N-acyl-D-mannosamine 6-phosphate. It participates in amino-sugar metabolism; N-acetylneuraminate degradation; D-fructose 6-phosphate from N-acetylneuraminate: step 3/5. In terms of biological role, converts N-acetylmannosamine-6-phosphate (ManNAc-6-P) to N-acetylglucosamine-6-phosphate (GlcNAc-6-P). The polypeptide is Putative N-acetylmannosamine-6-phosphate 2-epimerase (Shigella sonnei (strain Ss046)).